The primary structure comprises 380 residues: F-box/kelch-repeat protein At3g18720 (380 aa).

Residues 47 to 94 (LWDKQIPTDLLQEILSRLGLKANIHASLVCKTWLKEAVSVRKFQSRPW) form the F-box domain. Kelch repeat units lie at residues 190-233 (CVIS…INRC) and 234-279 (IFSN…LVRQ).

The sequence is that of F-box/kelch-repeat protein At3g18720 from Arabidopsis thaliana (Mouse-ear cress).